The primary structure comprises 507 residues: ATP synthase subunit alpha, chloroplastic (507 aa).

170–177 (GDRQTGKT) serves as a coordination point for ATP.

Belongs to the ATPase alpha/beta chains family. As to quaternary structure, F-type ATPases have 2 components, CF(1) - the catalytic core - and CF(0) - the membrane proton channel. CF(1) has five subunits: alpha(3), beta(3), gamma(1), delta(1), epsilon(1). CF(0) has four main subunits: a, b, b' and c.

The protein resides in the plastid. The protein localises to the chloroplast thylakoid membrane. It carries out the reaction ATP + H2O + 4 H(+)(in) = ADP + phosphate + 5 H(+)(out). Functionally, produces ATP from ADP in the presence of a proton gradient across the membrane. The alpha chain is a regulatory subunit. This is ATP synthase subunit alpha, chloroplastic from Nicotiana sylvestris (Wood tobacco).